The primary structure comprises 241 residues: MRSGVIAQKVGMTRVFTDAGEHIPVTVLRLSNCQVLGHRTSEKNGYVALQLGSGARKTVYLPKAERGQFAVAKVEPKRKVAEFRVSEDSLIPVGAEIQADHFVVGQFVDVTGTSVGKGFAGGMKRWNFGGLRATHGVSVSHRSIGSTGGRQDPGKTFKNKKMPGHMGVDRVTTLNLRVVQTDVERGLILVEGAVPGSKGGWIAVRDAVKKPLPKDAPKPGKFKVAGDDKVTADAPTEKEGA.

2 disordered regions span residues 139 to 166 (VSHR…PGHM) and 209 to 241 (KKPL…KEGA). Glutamine 151 carries the N5-methylglutamine modification.

The protein belongs to the universal ribosomal protein uL3 family. Part of the 50S ribosomal subunit. Forms a cluster with proteins L14 and L19. In terms of processing, methylated by PrmB.

Its function is as follows. One of the primary rRNA binding proteins, it binds directly near the 3'-end of the 23S rRNA, where it nucleates assembly of the 50S subunit. The polypeptide is Large ribosomal subunit protein uL3 (Nitrobacter hamburgensis (strain DSM 10229 / NCIMB 13809 / X14)).